Here is a 216-residue protein sequence, read N- to C-terminus: 3-keto-L-gulonate-6-phosphate decarboxylase UlaD (216 aa).

Asp11 is a binding site for substrate. Mg(2+) contacts are provided by Glu33 and Asp62. Position 192 (Arg192) interacts with substrate.

Belongs to the HPS/KGPDC family. KGPDC subfamily. As to quaternary structure, homodimer. It depends on Mg(2+) as a cofactor.

The enzyme catalyses 3-dehydro-L-gulonate 6-phosphate + H(+) = L-xylulose 5-phosphate + CO2. It participates in cofactor degradation; L-ascorbate degradation; D-xylulose 5-phosphate from L-ascorbate: step 2/4. In terms of biological role, catalyzes the decarboxylation of 3-keto-L-gulonate-6-P into L-xylulose-5-P. Is involved in the anaerobic L-ascorbate utilization. The protein is 3-keto-L-gulonate-6-phosphate decarboxylase UlaD of Salmonella typhi.